The chain runs to 792 residues: Molybdenum cofactor sulfurase (792 aa).

Lys246 bears the N6-(pyridoxal phosphate)lysine mark. The active site involves Cys414. Residues 646-792 (LRLLRQSSQR…LTCGDVVVVT (147 aa)) form the MOSC domain. Phosphoserine is present on Ser748.

It belongs to the class-V pyridoxal-phosphate-dependent aminotransferase family. MOCOS subfamily. It depends on pyridoxal 5'-phosphate as a cofactor.

The catalysed reaction is Mo-molybdopterin + L-cysteine + AH2 = thio-Mo-molybdopterin + L-alanine + A + H2O. Its pathway is cofactor biosynthesis; molybdopterin biosynthesis. Sulfurates the molybdenum cofactor. Sulfation of molybdenum is essential for xanthine dehydrogenase (XDH) and aldehyde oxidase (ADO) enzymes in which molybdenum cofactor is liganded by 1 oxygen and 1 sulfur atom in active form. This is Molybdenum cofactor sulfurase from Drosophila pseudoobscura pseudoobscura (Fruit fly).